Here is a 180-residue protein sequence, read N- to C-terminus: Capsid assembly scaffolding protein (180 aa).

The protein belongs to the SPP1-like scaffolding protein family. Homodimer.

Functionally, scaffolding protein involved in the icosahedric procapsid assembly. Coassembles with the capsid proteins to form the procapsid, in which the scaffolding protein is found within the external shell of icosahedrally arranged capsid protein subunits. In a subsequent step the scaffolding protein molecules are released from the procapsid. The protein is Capsid assembly scaffolding protein (g20) of Lactococcus phage mv4 (Lactococcus delbrueckii bacteriophage mv4).